Consider the following 532-residue polypeptide: Probable calcium-binding mitochondrial carrier CBG00135 (532 aa).

EF-hand domains are found at residues Glu70 to His105, Pro107 to Ile136, Ala137 to Asn172, and Leu173 to Thr208. 5 residues coordinate Ca(2+): Asp83, Asp85, Asp87, Ser89, and Asp94. Positions 150, 152, 154, 156, and 161 each coordinate Ca(2+). Solcar repeat units lie at residues Gly243 to Trp329, Leu339 to Cys425, and Pro436 to Gln526. 6 helical membrane-spanning segments follow: residues Leu249–Phe266, Gly304–Tyr323, Ser349–Met362, Gly400–Tyr419, Leu442–Leu459, and Gly501–Val518.

This sequence belongs to the mitochondrial carrier (TC 2.A.29) family.

It is found in the mitochondrion inner membrane. In terms of biological role, calcium-dependent mitochondrial solute carrier. The chain is Probable calcium-binding mitochondrial carrier CBG00135 from Caenorhabditis briggsae.